Here is a 545-residue protein sequence, read N- to C-terminus: Protein FAR1-RELATED SEQUENCE 9 (545 aa).

The 44-residue stretch at 22–65 (LNYLKRRQLENPGFLYAIEDDCGNVFWADPTCRLNYTYFGDTLV) folds into the FAR1 domain. One can recognise an MULE domain in the interval 66–150 (FDTTYRRGKR…RVFSQTRLRF (85 aa)). The segment at 345–381 (HTVSFDSLEVKANCSCQMFEYSGIICRHILAVFSAKN) adopts an SWIM-type zinc-finger fold. The segment at 460–495 (SNRTPGTRLPNGEAYPSEEARETANATNHPGGEKER) is disordered. Residues 492 to 545 (EKERTILELTAELERTGQRCEVYRANLLSILRDMEEQKFQLSLKVQNARLSLKE) adopt a coiled-coil conformation.

It belongs to the FHY3/FAR1 family. As to expression, expressed in hypocotyls, rosette and cauline leaves, inflorescences stems, flowers and siliques.

It localises to the nucleus. Its function is as follows. Putative transcription activator involved in regulating light control of development. May act as a negative regulator specific to phyB signaling. In Arabidopsis thaliana (Mouse-ear cress), this protein is Protein FAR1-RELATED SEQUENCE 9 (FRS9).